The chain runs to 248 residues: MTWRATVLTLFPEMFPGPLGVSLAGRALASGLWGLEARDIRDSATDRHRSVDDTPAGGGPGMVLRADVLAAAIDAVDAAADRPRLVMSPRGRPLTQARVAELAAGPGPLIVCGRFEGIDQRVIDARGLEEVSIGDYVLSGGEIAAMALIDACVRLLPGVMGKLESSTDESFSAGLLEYPQYTRPQTFEGRPIPEVLLSGDHGKVAAWRLGEAEALTRARRPDLWAARPAQTIRAKGESQKTPKNKTDG.

S-adenosyl-L-methionine is bound by residues glycine 113 and 133 to 138 (IGDYVL). The interval 226–248 (ARPAQTIRAKGESQKTPKNKTDG) is disordered. A compositionally biased stretch (basic and acidic residues) spans 234–248 (AKGESQKTPKNKTDG).

This sequence belongs to the RNA methyltransferase TrmD family. Homodimer.

The protein resides in the cytoplasm. It carries out the reaction guanosine(37) in tRNA + S-adenosyl-L-methionine = N(1)-methylguanosine(37) in tRNA + S-adenosyl-L-homocysteine + H(+). Specifically methylates guanosine-37 in various tRNAs. The protein is tRNA (guanine-N(1)-)-methyltransferase of Rhodopseudomonas palustris (strain ATCC BAA-98 / CGA009).